Consider the following 270-residue polypeptide: MAVGKNKGTSKGGKKGSKKKVVDPFTRKDWYDVKAPNMFSNRQVGKTLVNRTQGTRIASDGLKGRVFEVSLADLQNDTDAERSFRKFKLIAEDVHGRNVLCNFHGMDLTTDKLRSMVKKWQTLIECSVDVKTTDGYLLRVFCIGFTIKDSVSQRKTCYAQHSQIKEIRRKMTTIITRDVTSSDLKEVVNKLLPDSIAKDIEKSCQGIYPLHDVYIRKVKVLKKPRFDLANLLELHGDGGGKGAEVSTGAAEGGVTIDRPEGYEPPVQESV.

2 disordered regions span residues M1–V21 and G238–V270.

It belongs to the eukaryotic ribosomal protein eS1 family. Component of the small ribosomal subunit. Mature ribosomes consist of a small (40S) and a large (60S) subunit. The 40S subunit contains about 33 different proteins and 1 molecule of RNA (18S). The 60S subunit contains about 49 different proteins and 3 molecules of RNA (28S, 5.8S and 5S).

The protein localises to the cytoplasm. The sequence is that of Small ribosomal subunit protein eS1 from Aedes aegypti (Yellowfever mosquito).